We begin with the raw amino-acid sequence, 714 residues long: Polyribonucleotide nucleotidyltransferase (714 aa).

Positions 488 and 494 each coordinate Mg(2+). One can recognise a KH domain in the interval 555–614 (PRIEVMNIPTDKIRDVIGSGGKVIREIVEKTGAKINIEDDGTVKIASSNGKEIEAAKKWI). Residues 624–692 (GEIYEGTVVK…ERGKVRLSMK (69 aa)) enclose the S1 motif domain.

This sequence belongs to the polyribonucleotide nucleotidyltransferase family. Mg(2+) is required as a cofactor.

Its subcellular location is the cytoplasm. It catalyses the reaction RNA(n+1) + phosphate = RNA(n) + a ribonucleoside 5'-diphosphate. Functionally, involved in mRNA degradation. Catalyzes the phosphorolysis of single-stranded polyribonucleotides processively in the 3'- to 5'-direction. This chain is Polyribonucleotide nucleotidyltransferase, found in Brucella melitensis biotype 2 (strain ATCC 23457).